The sequence spans 550 residues: Membrane-bound alkaline phosphatase (550 aa).

The N-terminal stretch at 1-39 (MSTWWLVVVAAAAAAGLVRAEDRYHPERLAAGEASAATR) is a signal peptide. A Mg(2+)-binding site is contributed by aspartate 83. Aspartate 83 lines the Zn(2+) pocket. The active-site Phosphoserine intermediate is serine 133. Mg(2+)-binding residues include histidine 196, serine 198, and glutamate 356. Aspartate 361, histidine 365, aspartate 402, histidine 403, and histidine 479 together coordinate Zn(2+). The GPI-anchor amidated serine moiety is linked to residue serine 524. Residues 525 to 550 (AATVPTAALLSLLLAAFITLRHQCFL) constitute a propeptide, removed in mature form.

This sequence belongs to the alkaline phosphatase family. The cofactor is Mg(2+). It depends on Zn(2+) as a cofactor. Midgut.

The protein localises to the cell membrane. It carries out the reaction a phosphate monoester + H2O = an alcohol + phosphate. In Bombyx mori (Silk moth), this protein is Membrane-bound alkaline phosphatase (Alp-m).